A 458-amino-acid chain; its full sequence is Neuronal acetylcholine receptor subunit beta-3 (458 aa).

A signal peptide spans 1–21 (MLPDFMLVLIVLGIPSSATTG). The Extracellular portion of the chain corresponds to 22–237 (FNSIAENEDA…VLRRLPLFYT (216 aa)). Residues Asn51, Asn138, and Asn166 are each glycosylated (N-linked (GlcNAc...) asparagine). A disulfide bridge connects residues Cys153 and Cys167. 3 helical membrane passes run 238 to 258 (LFLI…FYLP), 267 to 287 (LSTS…EIIP), and 300 to 320 (LLFI…VINV). Residues 321-428 (HHRSSSTYHP…WKFVAQVLDR (108 aa)) are Cytoplasmic-facing. A helical membrane pass occupies residues 429–449 (IFLWLFLIVSVTGSVLIFTPA).

This sequence belongs to the ligand-gated ion channel (TC 1.A.9) family. Acetylcholine receptor (TC 1.A.9.1) subfamily. Beta-3/CHRNB3 sub-subfamily. In terms of assembly, neuronal AChR seems to be composed of two different type of subunits: alpha and beta. CHRNB3/beta-3 subunit is only able to form functional nAChRs when co-assembled with another beta subunit. Participates in pentameric assemblies along with CHRNA4/alpha-4 and CHRNB2/beta-2 subunits and with CHRNA6/alpha-6 as well, forming stoichiometries such as (CHRNA3:CHRNB4)2:CHRNB3, (CHRNA4:CHRNB2)2:CHRNB3 or (CHRNA6:CHRNB2)2:CHRNB3.

The protein localises to the synaptic cell membrane. Its subcellular location is the cell membrane. It catalyses the reaction Ca(2+)(in) = Ca(2+)(out). The enzyme catalyses K(+)(in) = K(+)(out). It carries out the reaction Na(+)(in) = Na(+)(out). Activated by a myriad of ligands such as acetylcholine, cytisine, nicotine, choline and epibatidine. In terms of biological role, component of neuronal acetylcholine receptors (nAChRs) that function as pentameric, ligand-gated cation channels with high calcium permeability among other activities. nAChRs are excitatory neurotrasnmitter receptors formed by a collection of nAChR subunits known to mediate synaptic transmission in the nervous system and the neuromuscular junction. Each nAchR subunit confers differential attributes to channel properties, including activation, deactivation and desensitization kinetics, pH sensitivity, cation permeability, and binding to allosteric modulators. Has an accessory rather than functional role and is only able to form functional nAChRs when co-assembled with another beta subunit. Participates in pentameric assemblies along with CHRNA3, CHRNA4, CHRNA6, CHRNB2 and CHRNB4. Modulates receptor assembly and increases receptor sensitivity to nicotine when associated with CHRNB2, CHRNA4 and/or CHRNA6 as well as CHRNA3 and CHRNB4. Seems to play a role in nicotine addiction. The chain is Neuronal acetylcholine receptor subunit beta-3 from Homo sapiens (Human).